The following is a 504-amino-acid chain: ATP synthase subunit alpha, chloroplastic (504 aa).

An ATP-binding site is contributed by 170 to 177; sequence GDRQTGKT.

This sequence belongs to the ATPase alpha/beta chains family. F-type ATPases have 2 components, CF(1) - the catalytic core - and CF(0) - the membrane proton channel. CF(1) has five subunits: alpha(3), beta(3), gamma(1), delta(1), epsilon(1). CF(0) has four main subunits: a, b, b' and c.

The protein resides in the plastid. Its subcellular location is the chloroplast thylakoid membrane. The catalysed reaction is ATP + H2O + 4 H(+)(in) = ADP + phosphate + 5 H(+)(out). Functionally, produces ATP from ADP in the presence of a proton gradient across the membrane. The alpha chain is a regulatory subunit. The chain is ATP synthase subunit alpha, chloroplastic from Cyanidium caldarium (Red alga).